We begin with the raw amino-acid sequence, 249 residues long: Protein ZPS1 (249 aa).

The N-terminal stretch at 1–20 (MKFSSGKSIIFATIASLALS) is a signal peptide. Residues asparagine 28, asparagine 57, asparagine 98, and asparagine 217 are each glycosylated (N-linked (GlcNAc...) asparagine).

Belongs to the ZPS1 family.

This Saccharomyces cerevisiae (strain ATCC 204508 / S288c) (Baker's yeast) protein is Protein ZPS1 (ZPS1).